The primary structure comprises 384 residues: Chaperone protein DnaJ (384 aa).

Residues 5 to 70 (DFYQVLGVSK…QKRQMYDQYG (66 aa)) form the J domain. The segment at 138–216 (GKTVELEIPT…CHGHGRKEET (79 aa)) adopts a CR-type zinc-finger fold. Zn(2+) is bound by residues cysteine 151, cysteine 154, cysteine 168, cysteine 171, cysteine 190, cysteine 193, cysteine 204, and cysteine 207. 4 CXXCXGXG motif repeats span residues 151-158 (CRDCNGSG), 168-175 (CGHCHGSG), 190-197 (CPQCRGTG), and 204-211 (CRTCHGHG).

This sequence belongs to the DnaJ family. Homodimer. Requires Zn(2+) as cofactor.

It is found in the cytoplasm. In terms of biological role, participates actively in the response to hyperosmotic and heat shock by preventing the aggregation of stress-denatured proteins and by disaggregating proteins, also in an autonomous, DnaK-independent fashion. Unfolded proteins bind initially to DnaJ; upon interaction with the DnaJ-bound protein, DnaK hydrolyzes its bound ATP, resulting in the formation of a stable complex. GrpE releases ADP from DnaK; ATP binding to DnaK triggers the release of the substrate protein, thus completing the reaction cycle. Several rounds of ATP-dependent interactions between DnaJ, DnaK and GrpE are required for fully efficient folding. Also involved, together with DnaK and GrpE, in the DNA replication of plasmids through activation of initiation proteins. This is Chaperone protein DnaJ from Idiomarina loihiensis (strain ATCC BAA-735 / DSM 15497 / L2-TR).